A 527-amino-acid chain; its full sequence is V-set and immunoglobulin domain-containing protein 10 (527 aa).

An N-terminal signal peptide occupies residues 1-13 (MWTRRWIQFLVLC). Ig-like C2-type domains lie at 14 to 111 (LHLW…LKVS), 123 to 212 (PTRT…RQLL), 216 to 306 (PPIT…CQIQ), and 310 to 399 (PLLE…KEIN). Residues 23-409 (YLGVFRGDVN…VWLTVNKPHN (387 aa)) are Extracellular-facing. Asn-32, Asn-41, Asn-52, Asn-64, Asn-74, Asn-90, Asn-129, Asn-139, Asn-191, Asn-206, Asn-226, Asn-260, Asn-276, Asn-325, Asn-346, and Asn-375 each carry an N-linked (GlcNAc...) asparagine glycan. A disulfide bridge links Cys-144 with Cys-194. Cys-238 and Cys-288 are disulfide-bonded. Residues Cys-330 and Cys-387 are joined by a disulfide bond. A helical membrane pass occupies residues 410–430 (IVGLVTALLLLFLLVVAIITG). The Cytoplasmic portion of the chain corresponds to 431-527 (TVLYCDPQIY…TGEENQNEEI (97 aa)). A disordered region spans residues 501–527 (RPPESTSSDLFSEVSDDTGEENQNEEI). Residues 514–527 (VSDDTGEENQNEEI) show a composition bias toward acidic residues.

The protein localises to the membrane. This chain is V-set and immunoglobulin domain-containing protein 10 (vsig10), found in Xenopus laevis (African clawed frog).